Reading from the N-terminus, the 424-residue chain is Tubulin gamma chain, nucleomorph (424 aa).

Residue 137–143 coordinates GTP; the sequence is NGGTGAG.

It belongs to the tubulin family.

Its function is as follows. Tubulin is the major constituent of microtubules. The gamma chain is found at microtubule organizing centers (MTOC) such as the spindle poles or the centrosome, suggesting that it is involved in the minus-end nucleation of microtubule assembly. The chain is Tubulin gamma chain, nucleomorph (tubG) from Guillardia theta (Cryptophyte).